A 38-amino-acid polypeptide reads, in one-letter code: Photosystem II reaction center protein M (38 aa).

Residues G7–I27 form a helical membrane-spanning segment.

Belongs to the PsbM family. PSII is composed of 1 copy each of membrane proteins PsbA, PsbB, PsbC, PsbD, PsbE, PsbF, PsbH, PsbI, PsbJ, PsbK, PsbL, PsbM, PsbT, PsbX, PsbY, PsbZ, Psb30/Ycf12, peripheral proteins PsbO, CyanoQ (PsbQ), PsbU, PsbV and a large number of cofactors. It forms dimeric complexes.

It localises to the cellular thylakoid membrane. Functionally, one of the components of the core complex of photosystem II (PSII). PSII is a light-driven water:plastoquinone oxidoreductase that uses light energy to abstract electrons from H(2)O, generating O(2) and a proton gradient subsequently used for ATP formation. It consists of a core antenna complex that captures photons, and an electron transfer chain that converts photonic excitation into a charge separation. This subunit is found at the monomer-monomer interface. This Nostoc sp. (strain PCC 7120 / SAG 25.82 / UTEX 2576) protein is Photosystem II reaction center protein M.